Reading from the N-terminus, the 1316-residue chain is DNA-directed RNA polymerase subunit beta' (1316 aa).

Zn(2+) contacts are provided by C60, C62, C75, and C78. 3 residues coordinate Mg(2+): D535, D537, and D539. Zn(2+) contacts are provided by C891, C968, C975, and C978.

This sequence belongs to the RNA polymerase beta' chain family. In terms of assembly, the RNAP catalytic core consists of 2 alpha, 1 beta, 1 beta' and 1 omega subunit. When a sigma factor is associated with the core the holoenzyme is formed, which can initiate transcription. Mg(2+) is required as a cofactor. Zn(2+) serves as cofactor.

The enzyme catalyses RNA(n) + a ribonucleoside 5'-triphosphate = RNA(n+1) + diphosphate. In terms of biological role, DNA-dependent RNA polymerase catalyzes the transcription of DNA into RNA using the four ribonucleoside triphosphates as substrates. This chain is DNA-directed RNA polymerase subunit beta', found in Mycobacterium ulcerans (strain Agy99).